A 613-amino-acid chain; its full sequence is Zinc metalloproteinase-disintegrin-like MTP4 (613 aa).

The first 20 residues, Met-1–Ser-20, serve as a signal peptide directing secretion. A propeptide spanning residues Ile-21–Leu-191 is cleaved from the precursor. Residues Lys-205 to Pro-401 form the Peptidase M12B domain. Glu-208 contacts Ca(2+). Residue Asn-282 is glycosylated (N-linked (GlcNAc...) asparagine). Asp-292 lines the Ca(2+) pocket. 3 disulfides stabilise this stretch: Cys-316–Cys-396, Cys-356–Cys-380, and Cys-358–Cys-363. Zn(2+) is bound by residues His-341, His-345, and His-351. Ca(2+) contacts are provided by Cys-396, Asn-399, Asn-414, Phe-416, Glu-418, Glu-421, and Asp-424. The Disintegrin domain maps to Pro-409–Asn-495. 15 cysteine pairs are disulfide-bonded: Cys-412-Cys-441, Cys-423-Cys-436, Cys-425-Cys-431, Cys-435-Cys-458, Cys-449-Cys-455, Cys-454-Cys-480, Cys-467-Cys-487, Cys-474-Cys-506, Cys-499-Cys-511, Cys-518-Cys-568, Cys-533-Cys-575, Cys-543-Cys-577, Cys-546-Cys-556, Cys-563-Cys-601, and Cys-595-Cys-606. N-linked (GlcNAc...) asparagine glycosylation is present at Asn-437. The short motif at Asp-473–Asp-475 is the D/ECD-tripeptide element. 4 residues coordinate Ca(2+): Asp-475, Leu-476, Glu-478, and Asp-490. The segment at Lys-561 to Thr-574 is hypervariable region that may play important roles toward cell migration. An N-linked (GlcNAc...) asparagine glycan is attached at Asn-572.

Belongs to the venom metalloproteinase (M12B) family. P-III subfamily. Monomer. Requires Zn(2+) as cofactor. In terms of tissue distribution, expressed by the venom gland.

The protein localises to the secreted. Functionally, snake venom zinc metalloproteinase that may impair hemostasis in the prey. The chain is Zinc metalloproteinase-disintegrin-like MTP4 from Drysdalia coronoides (White-lipped snake).